The chain runs to 461 residues: L-seryl-tRNA(Sec) selenium transferase (461 aa).

N6-(pyridoxal phosphate)lysine is present on lysine 291.

The protein belongs to the SelA family. Pyridoxal 5'-phosphate serves as cofactor.

It is found in the cytoplasm. The catalysed reaction is L-seryl-tRNA(Sec) + selenophosphate + H(+) = L-selenocysteinyl-tRNA(Sec) + phosphate. It functions in the pathway aminoacyl-tRNA biosynthesis; selenocysteinyl-tRNA(Sec) biosynthesis; selenocysteinyl-tRNA(Sec) from L-seryl-tRNA(Sec) (bacterial route): step 1/1. Its function is as follows. Converts seryl-tRNA(Sec) to selenocysteinyl-tRNA(Sec) required for selenoprotein biosynthesis. The sequence is that of L-seryl-tRNA(Sec) selenium transferase from Caldanaerobacter subterraneus subsp. tengcongensis (strain DSM 15242 / JCM 11007 / NBRC 100824 / MB4) (Thermoanaerobacter tengcongensis).